The chain runs to 748 residues: Polyribonucleotide nucleotidyltransferase (748 aa).

The Mg(2+) site is built by aspartate 487 and aspartate 493. Residues 554–613 (PSTTTIKIDKDKIRDIIGPGGKVIKEICETSGAKIDISDDGTVSVYASDRDKLKVALDKI) enclose the KH domain. The S1 motif domain maps to 623–691 (GEIFNGTVVK…NKGKAKLTIK (69 aa)). A disordered region spans residues 695 to 733 (KDKFSNNTKPKTSVNNTKDNSEPEQRHDSSKKRAWNEDN). The span at 699–712 (SNNTKPKTSVNNTK) shows a compositional bias: polar residues. A compositionally biased stretch (basic and acidic residues) spans 713-722 (DNSEPEQRHD).

Belongs to the polyribonucleotide nucleotidyltransferase family. Requires Mg(2+) as cofactor.

It is found in the cytoplasm. It carries out the reaction RNA(n+1) + phosphate = RNA(n) + a ribonucleoside 5'-diphosphate. In terms of biological role, involved in mRNA degradation. Catalyzes the phosphorolysis of single-stranded polyribonucleotides processively in the 3'- to 5'-direction. The sequence is that of Polyribonucleotide nucleotidyltransferase from Rickettsia rickettsii (strain Iowa).